The sequence spans 216 residues: Noggin-1 (216 aa).

Residues methionine 1–alanine 18 form the signal peptide. The N-linked (GlcNAc...) asparagine glycan is linked to asparagine 55.

This sequence belongs to the noggin family. As to quaternary structure, homodimer; disulfide-linked.

Its subcellular location is the secreted. In terms of biological role, inhibitor of bone morphogenetic proteins (BMP) signaling. May play an important role in the dorsoventral patterning of the embryo. This Danio rerio (Zebrafish) protein is Noggin-1 (nog1).